We begin with the raw amino-acid sequence, 218 residues long: LexA repressor (218 aa).

Residues 31–51 constitute a DNA-binding region (H-T-H motif); it reads IREIQDGLRISSTSVVAYNLR. Active-site for autocatalytic cleavage activity residues include serine 137 and lysine 176.

Belongs to the peptidase S24 family. As to quaternary structure, homodimer.

The catalysed reaction is Hydrolysis of Ala-|-Gly bond in repressor LexA.. Functionally, represses a number of genes involved in the response to DNA damage (SOS response), including recA and lexA. In the presence of single-stranded DNA, RecA interacts with LexA causing an autocatalytic cleavage which disrupts the DNA-binding part of LexA, leading to derepression of the SOS regulon and eventually DNA repair. The polypeptide is LexA repressor (Roseiflexus sp. (strain RS-1)).